We begin with the raw amino-acid sequence, 255 residues long: Imidazole glycerol phosphate synthase subunit HisF (255 aa).

Residues aspartate 13 and aspartate 132 contribute to the active site.

The protein belongs to the HisA/HisF family. In terms of assembly, heterodimer of HisH and HisF.

It is found in the cytoplasm. The enzyme catalyses 5-[(5-phospho-1-deoxy-D-ribulos-1-ylimino)methylamino]-1-(5-phospho-beta-D-ribosyl)imidazole-4-carboxamide + L-glutamine = D-erythro-1-(imidazol-4-yl)glycerol 3-phosphate + 5-amino-1-(5-phospho-beta-D-ribosyl)imidazole-4-carboxamide + L-glutamate + H(+). It participates in amino-acid biosynthesis; L-histidine biosynthesis; L-histidine from 5-phospho-alpha-D-ribose 1-diphosphate: step 5/9. IGPS catalyzes the conversion of PRFAR and glutamine to IGP, AICAR and glutamate. The HisF subunit catalyzes the cyclization activity that produces IGP and AICAR from PRFAR using the ammonia provided by the HisH subunit. This is Imidazole glycerol phosphate synthase subunit HisF from Leptospira biflexa serovar Patoc (strain Patoc 1 / ATCC 23582 / Paris).